Here is a 179-residue protein sequence, read N- to C-terminus: Large ribosomal subunit protein uL5 (179 aa).

This sequence belongs to the universal ribosomal protein uL5 family. In terms of assembly, part of the 50S ribosomal subunit; part of the 5S rRNA/L5/L18/L25 subcomplex. Contacts the 5S rRNA and the P site tRNA. Forms a bridge to the 30S subunit in the 70S ribosome.

In terms of biological role, this is one of the proteins that bind and probably mediate the attachment of the 5S RNA into the large ribosomal subunit, where it forms part of the central protuberance. In the 70S ribosome it contacts protein S13 of the 30S subunit (bridge B1b), connecting the 2 subunits; this bridge is implicated in subunit movement. Contacts the P site tRNA; the 5S rRNA and some of its associated proteins might help stabilize positioning of ribosome-bound tRNAs. This chain is Large ribosomal subunit protein uL5, found in Pseudomonas aeruginosa (strain LESB58).